A 474-amino-acid chain; its full sequence is Trigger factor (474 aa).

A PPIase FKBP-type domain is found at 171-258; it reads GDVAVIDFQG…LKELKTRDLP (88 aa). The tract at residues 441–474 is disordered; the sequence is TEVDAASATVETTATETAEEAPEAPKAKKGKKKA. Over residues 444–456 the composition is skewed to low complexity; sequence DAASATVETTATE.

It belongs to the FKBP-type PPIase family. Tig subfamily.

Its subcellular location is the cytoplasm. It catalyses the reaction [protein]-peptidylproline (omega=180) = [protein]-peptidylproline (omega=0). Functionally, involved in protein export. Acts as a chaperone by maintaining the newly synthesized protein in an open conformation. Functions as a peptidyl-prolyl cis-trans isomerase. The protein is Trigger factor of Synechococcus elongatus (strain ATCC 33912 / PCC 7942 / FACHB-805) (Anacystis nidulans R2).